A 436-amino-acid polypeptide reads, in one-letter code: MKILILGSGVIGVTSAWYLVQQGHEVTVIDRQGSAAEETSAANAGQISPGYATPWGAPGIPLKAIKWMFQRHAPLAIRPDGSLFQLRWMWQMLRNCDASHYAINKSRMVRLAEYSRDCIKQLRADTGIQYEGRQRGTLQLFRTNKQFDNAVNDIAVLEQEGVPYNLLTADKLATVEPALAHAAHKLTGGLQLPNDETGDCQLFTKELVKMAEAAGVTFLFNKQVKQLLVEGHRIIGVQCEDGVMTADNYVVAMGAYSTELLKGLVKIPVYPLKGYSLTMPIVDAERAPVSTALDETYKIAITRFDNRIRVGGMAEVVGFNLNLLKARHETLKMVVQDLYPGGGDITQTHFWTGLRPMTPDGTPIVGPTEYHNLYLNTGHGTLGWTMACGSSQLLADIISGKKPAIASDDLSVFRYVNGFNTKLVPFSHQLHTELRG.

FAD is bound at residue 3-17 (ILILGSGVIGVTSAW).

The protein belongs to the DadA oxidoreductase family. It depends on FAD as a cofactor.

The enzyme catalyses a D-alpha-amino acid + A + H2O = a 2-oxocarboxylate + AH2 + NH4(+). It participates in amino-acid degradation; D-alanine degradation; NH(3) and pyruvate from D-alanine: step 1/1. Functionally, oxidative deamination of D-amino acids. This chain is D-amino acid dehydrogenase, found in Photorhabdus laumondii subsp. laumondii (strain DSM 15139 / CIP 105565 / TT01) (Photorhabdus luminescens subsp. laumondii).